The following is a 359-amino-acid chain: Nicotinate-nucleotide--dimethylbenzimidazole phosphoribosyltransferase (359 aa).

The active-site Proton acceptor is glutamate 318.

The protein belongs to the CobT family. In terms of assembly, homodimer.

It catalyses the reaction 5,6-dimethylbenzimidazole + nicotinate beta-D-ribonucleotide = alpha-ribazole 5'-phosphate + nicotinate + H(+). Its pathway is nucleoside biosynthesis; alpha-ribazole biosynthesis; alpha-ribazole from 5,6-dimethylbenzimidazole: step 1/2. Functionally, catalyzes the synthesis of alpha-ribazole-5'-phosphate from nicotinate mononucleotide (NAMN) and 5,6-dimethylbenzimidazole (DMB). The polypeptide is Nicotinate-nucleotide--dimethylbenzimidazole phosphoribosyltransferase (Escherichia coli O9:H4 (strain HS)).